Here is a 249-residue protein sequence, read N- to C-terminus: Octanoyltransferase (249 aa).

In terms of domain architecture, BPL/LPL catalytic spans 53–234; that stretch reads PDTDDEIWVV…RLIAHLDGAT (182 aa). Substrate is bound by residues 93–100, 165–167, and 178–180; these read RGGQITYH, ALG, and GLS. The active-site Acyl-thioester intermediate is C196.

This sequence belongs to the LipB family.

Its subcellular location is the cytoplasm. It carries out the reaction octanoyl-[ACP] + L-lysyl-[protein] = N(6)-octanoyl-L-lysyl-[protein] + holo-[ACP] + H(+). It functions in the pathway protein modification; protein lipoylation via endogenous pathway; protein N(6)-(lipoyl)lysine from octanoyl-[acyl-carrier-protein]: step 1/2. Catalyzes the transfer of endogenously produced octanoic acid from octanoyl-acyl-carrier-protein onto the lipoyl domains of lipoate-dependent enzymes. Lipoyl-ACP can also act as a substrate although octanoyl-ACP is likely to be the physiological substrate. The sequence is that of Octanoyltransferase from Burkholderia mallei (strain NCTC 10247).